A 223-amino-acid polypeptide reads, in one-letter code: Cuticular glutathione peroxidase (223 aa).

A signal peptide spans 1–19 (MSAQLLILSHVVLLQLIVA). The N-linked (GlcNAc...) asparagine glycan is linked to Asn39. Cys74 is a catalytic residue. The N-linked (GlcNAc...) asparagine glycan is linked to Asn92.

It belongs to the glutathione peroxidase family. Homotetramer.

The protein resides in the secreted. The catalysed reaction is 2 glutathione + H2O2 = glutathione disulfide + 2 H2O. Could inhibit the oxidative burst of leukocytes and neutralize the secondary products of lipid peroxidation, thus providing the resistance of these parasites to immune effector mechanisms and their persistence in the mammalian host. It may also be involved in the formation of cross-linking residues such as dityrosine, trityrosine and isotrityrosine identified in cuticular collagen. Highly cross-linked external cortex may also serve to protect the parasite from immune attack. This Wuchereria bancrofti protein is Cuticular glutathione peroxidase.